The chain runs to 222 residues: Large ribosomal subunit protein uL1 (222 aa).

This sequence belongs to the universal ribosomal protein uL1 family. As to quaternary structure, part of the 50S ribosomal subunit.

In terms of biological role, binds directly to 23S rRNA. Probably involved in E site tRNA release. Functionally, protein L1 is also a translational repressor protein, it controls the translation of its operon by binding to its mRNA. The sequence is that of Large ribosomal subunit protein uL1 from Pyrobaculum aerophilum (strain ATCC 51768 / DSM 7523 / JCM 9630 / CIP 104966 / NBRC 100827 / IM2).